The chain runs to 266 residues: Apolipoprotein A-I (266 aa).

Residues 1–18 (MKAVVLTLAVLFLTGSQA) form the signal peptide. Tandem repeats lie at residues 67–88 (LKLL…EQIG) and 89–110 (PVTQ…QEMS). Residues 67-266 (LKLLDNWDSL…DEAAKKLNTQ (200 aa)) are 10 X approximate tandem repeats. M109 carries the post-translational modification Methionine sulfoxide. A 3; half-length repeat occupies 111–121 (KDLEEVKQKVQ). Repeat copies occupy residues 122–143 (PYLD…QKVA), 144–165 (PLGT…EKLT), 166–187 (PLGE…AHLA), 188–209 (PYSD…EGGS), and 210–231 (ASLA…EKAK). One copy of the 9; half-length repeat lies at 232 to 242 (PALEDLRQGLL). Repeat 10 spans residues 243–266 (PVLESFKVSLLAAVDEAAKKLNTQ).

Belongs to the apolipoprotein A1/A4/E family. Homodimer. Interacts with APOA1BP and CLU. Component of a sperm activating protein complex (SPAP), consisting of APOA1, an immunoglobulin heavy chain, an immunoglobulin light chain and albumin. Interacts with NDRG1. Interacts with SCGB3A2. Interacts with NAXE and YJEFN3. In terms of processing, glycosylated. Post-translationally, palmitoylated. Phosphorylation sites are present in the extracellular medium.

Its subcellular location is the secreted. Functionally, participates in the reverse transport of cholesterol from tissues to the liver for excretion by promoting cholesterol efflux from tissues and by acting as a cofactor for the lecithin cholesterol acyltransferase (LCAT). As part of the SPAP complex, activates spermatozoa motility. This chain is Apolipoprotein A-I (APOA1), found in Mustela putorius furo (European domestic ferret).